The following is a 509-amino-acid chain: ATP synthase subunit alpha (509 aa).

169-176 (GDRKTGKT) lines the ATP pocket.

The protein belongs to the ATPase alpha/beta chains family. F-type ATPases have 2 components, CF(1) - the catalytic core - and CF(0) - the membrane proton channel. CF(1) has five subunits: alpha(3), beta(3), gamma(1), delta(1), epsilon(1). CF(0) has three main subunits: a(1), b(2) and c(9-12). The alpha and beta chains form an alternating ring which encloses part of the gamma chain. CF(1) is attached to CF(0) by a central stalk formed by the gamma and epsilon chains, while a peripheral stalk is formed by the delta and b chains.

It localises to the cell membrane. It carries out the reaction ATP + H2O + 4 H(+)(in) = ADP + phosphate + 5 H(+)(out). In terms of biological role, produces ATP from ADP in the presence of a proton gradient across the membrane. The alpha chain is a regulatory subunit. The polypeptide is ATP synthase subunit alpha (Lacticaseibacillus casei (strain BL23) (Lactobacillus casei)).